The sequence spans 328 residues: Biotin synthase (328 aa).

The region spanning 53 to 282 (FHGNRVDLCA…ATTIRYAGGR (230 aa)) is the Radical SAM core domain. Residues C71, C75, and C78 each coordinate [4Fe-4S] cluster. Residues S115, C147, C207, and R277 each contribute to the [2Fe-2S] cluster site.

Belongs to the radical SAM superfamily. Biotin synthase family. Homodimer. Requires [4Fe-4S] cluster as cofactor. The cofactor is [2Fe-2S] cluster.

It carries out the reaction (4R,5S)-dethiobiotin + (sulfur carrier)-SH + 2 reduced [2Fe-2S]-[ferredoxin] + 2 S-adenosyl-L-methionine = (sulfur carrier)-H + biotin + 2 5'-deoxyadenosine + 2 L-methionine + 2 oxidized [2Fe-2S]-[ferredoxin]. Its pathway is cofactor biosynthesis; biotin biosynthesis; biotin from 7,8-diaminononanoate: step 2/2. Catalyzes the conversion of dethiobiotin (DTB) to biotin by the insertion of a sulfur atom into dethiobiotin via a radical-based mechanism. The polypeptide is Biotin synthase (Desulforudis audaxviator (strain MP104C)).